The chain runs to 299 residues: Regucalcin (299 aa).

E18 is an a divalent metal cation binding site. R101, N103, and E121 together coordinate substrate. A divalent metal cation-binding residues include N154 and D204. D204 serves as the catalytic Proton donor/acceptor. N6-succinyllysine occurs at positions 244 and 253.

It belongs to the SMP-30/CGR1 family. In terms of assembly, monomer. The cofactor is Zn(2+). Mn(2+) serves as cofactor. It depends on Ca(2+) as a cofactor. Requires Mg(2+) as cofactor.

The protein localises to the cytoplasm. The enzyme catalyses D-glucono-1,5-lactone + H2O = D-gluconate + H(+). It participates in cofactor biosynthesis; L-ascorbate biosynthesis via UDP-alpha-D-glucuronate pathway; L-ascorbate from UDP-alpha-D-glucuronate: step 3/4. Gluconolactonase with low activity towards other sugar lactones, including gulonolactone and galactonolactone. Catalyzes a key step in ascorbic acid (vitamin C) biosynthesis. Can also hydrolyze diisopropyl phosphorofluoridate and phenylacetate (in vitro). Calcium-binding protein. Modulates Ca(2+) signaling, and Ca(2+)-dependent cellular processes and enzyme activities. This is Regucalcin (RGN) from Bos taurus (Bovine).